Consider the following 435-residue polypeptide: MLTSLSLTALALLPSANALVRKDGVGRLPALGWNSWNAFGCDVDSTKIMTAANEMVHLGLKDLGYEYVNIDDCWSVKNTRNSTTQRIIPDTQKFPDGISGVADQVHQLGLKIGIYSSAGETTCAGYPASLGYEKVDAEAFAEWGIDYLKYDNCGVPSNWTDQYSSCVPDGSNEPANGTCPGLSNPAPAGYDWTKSNTFTRYTMMRDALLGQTRTILYSLCDWGQADVNTWGNETGNSWRMSGDISANWARIAQIANENTFRMNYVGFWGHPDPDMLEVGNGDLTAAENRAHFALWAIMKSPLIIGTALDGISDANLAVLKNKYLIEFNQDPIIGRSAHPYKWGYNPDWTFDPAHPAEYWSGPSSTLKGTLVLMLNSENSTSTRTAVWKEIPELKGHNAYRVTDAWSGKDLGCVKKQYSASLASHDVAVLVVKEAC.

The first 18 residues, 1 to 18, serve as a signal peptide directing secretion; it reads MLTSLSLTALALLPSANA. An intrachain disulfide couples Cys-41 to Cys-73. An N-linked (GlcNAc...) asparagine glycan is attached at Asn-81. Cys-123 and Cys-153 are oxidised to a cystine. Asp-151 acts as the Nucleophile in catalysis. 2 N-linked (GlcNAc...) asparagine glycosylation sites follow: Asn-158 and Asn-176. 221 to 225 provides a ligand contact to substrate; sequence DWGQA. N-linked (GlcNAc...) asparagine glycosylation occurs at Asn-232. Asp-243 functions as the Proton donor in the catalytic mechanism. An N-linked (GlcNAc...) asparagine glycan is attached at Asn-378.

This sequence belongs to the glycosyl hydrolase 27 family.

Its subcellular location is the secreted. The enzyme catalyses Hydrolysis of terminal, non-reducing alpha-D-galactose residues in alpha-D-galactosides, including galactose oligosaccharides, galactomannans and galactolipids.. Its function is as follows. Hydrolyzes a variety of simple alpha-D-galactoside as well as more complex molecules such as oligosaccharides and polysaccharides. The polypeptide is Probable alpha-galactosidase B (agl1) (Penicillium simplicissimum).